A 678-amino-acid chain; its full sequence is MAPFPDEVDLFTGPHWRMKQLVGRYCEKLSNTNFSNNNDLLALLQSLYETFKEFKMHEQIENEYIIGLLQQRSHTVYNVHSDNKLSEMLVLFEKGMKNVKNEYKQLNYVQQLKERLEAFTSDFLPHMKEEEEVFQPMLMEYFTYDEMKDIKKKVIAQHCSQKDTTELLRGLSLWNKAEELQKVLKYSVDEKAERNSKTQKSSSSISSLPPEVMLNIFTYLNPQDLCRCSQVNTEWAQLAKTGSLWRHLYPVLWARGDWYSGSHAYLDNEPDEDWISRRKDESRAYQEWDEDADIDESEETGEEEDSSISMAQREKELLNSLVHYILPYVGHSVKTLVLAYSSATSSKVIRQMLEYCPNLEHLDLTQTDISDSAFNGWHFGACQTLHHIDLSGCDKITDLTLEKLSVALGIPSAHKKRLLKCYRNNRTLKDIRNQMRCSSLAQITGESTIYSDAFWANSDRSQDYTSPPIWILDSGNPGDIEDAADWKFRTTDGLCVLEMAPSVTCFSNGCCSRARPGRWTNVGWQEHCKAATVSYCGHTLCGNTLRTIHTLPEASALCNIGTRTLHSDITDCFPGSAKSDQQAARALQFLSLSGCHQITDHGLRALTIGGGLPKLEHLNLSGCLNVTGSGLQDLVATCPSLNDEHFYYCDNISGPHGATASGCQNLQCGFRMCCRSGE.

Positions 1–159 (MAPFPDEVDL…IKKKVIAQHC (159 aa)) are hemerythrin-like. 7 residues coordinate Fe(3+): His-15, His-57, Glu-58, Glu-61, His-80, His-126, and Glu-130. The 47-residue stretch at 202–248 (SSSISSLPPEVMLNIFTYLNPQDLCRCSQVNTEWAQLAKTGSLWRHL) folds into the F-box domain. Residues 285–308 (YQEWDEDADIDESEETGEEEDSSI) form a disordered region. Acidic residues predominate over residues 287–306 (EWDEDADIDESEETGEEEDS). 7 LRR repeats span residues 314–340 (EKELLNSLVHYILPYVGHSVKTLVLAY), 341–366 (SSATSSKVIRQMLEYCPNLEHLDLTQ), 367–392 (TDISDSAFNGWHFGACQTLHHIDLSG), 393–420 (CDKITDLTLEKLSVALGIPSAHKKRLLK), 566–594 (HSDITDCFPGSAKSDQQAARALQFLSLSG), 595–622 (CHQITDHGLRALTIGGGLPKLEHLNLSG), and 623–648 (CLNVTGSGLQDLVATCPSLNDEHFYY). [2Fe-2S] cluster is bound by residues Cys-649, Cys-663, Cys-673, and Cys-674. Residues 655–678 (PHGATASGCQNLQCGFRMCCRSGE) form an LRR 8 repeat.

As to quaternary structure, part of a SCF (SKP1-cullin-F-box) protein ligase complex. The cofactor is [2Fe-2S] cluster. Post-translationally, ubiquitinated upon iron and oxygen depletion, leading to its degradation by the proteasome. Ubiquitination is regulated by the hemerythrin-like region that acts as an oxygen and iron sensor.

It localises to the cytoplasm. The protein resides in the perinuclear region. It is found in the nucleus. The protein operates within protein modification; protein ubiquitination. Its function is as follows. Component of some SCF (SKP1-cullin-F-box) protein ligase complex that plays a central role in iron homeostasis by promoting the ubiquitination and subsequent degradation of ireb2/irp2. Upon high iron and oxygen level, it specifically recognizes and binds ireb2/irp2, promoting its ubiquitination and degradation by the proteasome. The sequence is that of F-box/LRR-repeat protein 5 (fbxl5) from Xenopus laevis (African clawed frog).